A 122-amino-acid polypeptide reads, in one-letter code: Small ribosomal subunit protein uS13 (122 aa).

Residues Gly-95 to Lys-122 are disordered.

It belongs to the universal ribosomal protein uS13 family. As to quaternary structure, part of the 30S ribosomal subunit. Forms a loose heterodimer with protein S19. Forms two bridges to the 50S subunit in the 70S ribosome.

Located at the top of the head of the 30S subunit, it contacts several helices of the 16S rRNA. In the 70S ribosome it contacts the 23S rRNA (bridge B1a) and protein L5 of the 50S subunit (bridge B1b), connecting the 2 subunits; these bridges are implicated in subunit movement. Contacts the tRNAs in the A and P-sites. The protein is Small ribosomal subunit protein uS13 of Lawsonia intracellularis (strain PHE/MN1-00).